A 332-amino-acid polypeptide reads, in one-letter code: Ketol-acid reductoisomerase (NADP(+)) (332 aa).

The 181-residue stretch at 4–184 (ARMYYDEDAD…GGTRAGILET (181 aa)) folds into the KARI N-terminal Rossmann domain. NADP(+)-binding positions include 27–30 (YGSQ), serine 53, serine 55, and 85–88 (DEVQ). Residue histidine 110 is part of the active site. Glycine 136 is an NADP(+) binding site. In terms of domain architecture, KARI C-terminal knotted spans 185–330 (TFREEAETDL…ADLRKMMSWL (146 aa)). Mg(2+)-binding residues include aspartate 193, glutamate 197, glutamate 229, and glutamate 233. A substrate-binding site is contributed by serine 254.

Belongs to the ketol-acid reductoisomerase family. It depends on Mg(2+) as a cofactor.

It catalyses the reaction (2R)-2,3-dihydroxy-3-methylbutanoate + NADP(+) = (2S)-2-acetolactate + NADPH + H(+). The catalysed reaction is (2R,3R)-2,3-dihydroxy-3-methylpentanoate + NADP(+) = (S)-2-ethyl-2-hydroxy-3-oxobutanoate + NADPH + H(+). The protein operates within amino-acid biosynthesis; L-isoleucine biosynthesis; L-isoleucine from 2-oxobutanoate: step 2/4. Its pathway is amino-acid biosynthesis; L-valine biosynthesis; L-valine from pyruvate: step 2/4. Functionally, involved in the biosynthesis of branched-chain amino acids (BCAA). Catalyzes an alkyl-migration followed by a ketol-acid reduction of (S)-2-acetolactate (S2AL) to yield (R)-2,3-dihydroxy-isovalerate. In the isomerase reaction, S2AL is rearranged via a Mg-dependent methyl migration to produce 3-hydroxy-3-methyl-2-ketobutyrate (HMKB). In the reductase reaction, this 2-ketoacid undergoes a metal-dependent reduction by NADPH to yield (R)-2,3-dihydroxy-isovalerate. The protein is Ketol-acid reductoisomerase (NADP(+)) of Gloeobacter violaceus (strain ATCC 29082 / PCC 7421).